The primary structure comprises 99 residues: Acylphosphatase (99 aa).

Residues Ala-11–Pro-97 enclose the Acylphosphatase-like domain. Active-site residues include Arg-26 and Asn-44.

This sequence belongs to the acylphosphatase family.

The catalysed reaction is an acyl phosphate + H2O = a carboxylate + phosphate + H(+). The polypeptide is Acylphosphatase (acyP) (Rhizorhabdus wittichii (strain DSM 6014 / CCUG 31198 / JCM 15750 / NBRC 105917 / EY 4224 / RW1) (Sphingomonas wittichii)).